The primary structure comprises 716 residues: Translation initiation factor IF-2 (716 aa).

Residues 50–136 (YKKGGARAKS…VKPKKELPEK (87 aa)) are disordered. The span at 62-84 (PAETNKNKQPQGVNQQSAGNQPN) shows a compositional bias: polar residues. Positions 101–113 (KNKKNNNNKKNKR) are enriched in basic residues. Positions 114-126 (NNNNNKNQHQQKP) are enriched in low complexity. The tr-type G domain maps to 217 to 386 (IRPPVVTIMG…LLVSEVEELK (170 aa)). Residues 226 to 233 (GHVDHGKT) form a G1 region. 226–233 (GHVDHGKT) contacts GTP. The G2 stretch occupies residues 251–255 (GITQH). A G3 region spans residues 272 to 275 (DTPG). Residues 272 to 276 (DTPGH) and 326 to 329 (NKID) contribute to the GTP site. Positions 326–329 (NKID) are G4. The G5 stretch occupies residues 362–364 (SAL).

This sequence belongs to the TRAFAC class translation factor GTPase superfamily. Classic translation factor GTPase family. IF-2 subfamily.

The protein resides in the cytoplasm. In terms of biological role, one of the essential components for the initiation of protein synthesis. Protects formylmethionyl-tRNA from spontaneous hydrolysis and promotes its binding to the 30S ribosomal subunits. Also involved in the hydrolysis of GTP during the formation of the 70S ribosomal complex. This Bacillus subtilis (strain 168) protein is Translation initiation factor IF-2 (infB).